Reading from the N-terminus, the 338-residue chain is Anthranilate phosphoribosyltransferase (338 aa).

Residues Gly78, 81–82 (GD), Thr86, 88–91 (NIST), 106–114 (KHGNRSVSS), and Ser118 contribute to the 5-phospho-alpha-D-ribose 1-diphosphate site. Gly78 provides a ligand contact to anthranilate. Ser90 lines the Mg(2+) pocket. Asn109 contributes to the anthranilate binding site. Arg164 provides a ligand contact to anthranilate. Mg(2+) contacts are provided by Asp223 and Glu224.

The protein belongs to the anthranilate phosphoribosyltransferase family. Homodimer. Mg(2+) serves as cofactor.

It catalyses the reaction N-(5-phospho-beta-D-ribosyl)anthranilate + diphosphate = 5-phospho-alpha-D-ribose 1-diphosphate + anthranilate. It functions in the pathway amino-acid biosynthesis; L-tryptophan biosynthesis; L-tryptophan from chorismate: step 2/5. Catalyzes the transfer of the phosphoribosyl group of 5-phosphorylribose-1-pyrophosphate (PRPP) to anthranilate to yield N-(5'-phosphoribosyl)-anthranilate (PRA). This Bacillus velezensis (strain DSM 23117 / BGSC 10A6 / LMG 26770 / FZB42) (Bacillus amyloliquefaciens subsp. plantarum) protein is Anthranilate phosphoribosyltransferase.